The chain runs to 538 residues: uncharacterized protein (538 aa).

An N-terminal signal peptide occupies residues 1–17 (MSFSATILFSPPSGSEA). The interval 101-131 (RQGKVSIPDEDGESRAHSSPPEEPGPLKESP) is disordered. Glycyl lysine isopeptide (Lys-Gly) (interchain with G-Cter in SUMO2) cross-links involve residues Lys128 and Lys221. Ser224 bears the Phosphoserine mark. The interval 233–253 (RATPETGPENGTKLPPPRPED) is disordered. Phosphoserine is present on residues Ser285 and Ser428. The interval 488–523 (LPPELYNPNFQEEEDEGGDENAPGSPSFDQPHKTCC) is disordered.

It localises to the secreted. This is an uncharacterized protein from Homo sapiens (Human).